The chain runs to 400 residues: MLSGLMNFLNACLWPRSDQQARSASDSGGRQEGLLWFRDSGQHVFGDFSMAVVQANSLLEDQSQLESGSLSSHDSGPFGTFVGVYDGHGGPETSRFINDHMFHHLKRFTAEQQCMSSEVIKKAFQATEEGFLSIVTNQFQTRPQIATVGSCCLVSVICDGKLYVANAGDSRAVLGQVMRVTGEAHATQLSAEHNASIESVRRELQALHPDHPDIVVLKHNVWRVKGIIQVSRSIGDVYLKRSEFNREPLYAKFRLRSPFSKPLLSAEPAITVHTLEPHDQFIICASDGLWEHMSNQEAVDIVQNHPRNGIAKRLVKVALQEAAKKREMRYSDLKKIDRGVRRHFHDDITVIVVFFDTNLVSRGSMLRGPAVSVRGAGVNLPHNTLAPCTTPTQAAAAGAS.

The PPM-type phosphatase domain occupies 47 to 355 (DFSMAVVQAN…DDITVIVVFF (309 aa)). At serine 75 the chain carries Phosphoserine. Residues aspartate 86, glycine 87, aspartate 287, and aspartate 346 each contribute to the Mn(2+) site.

It belongs to the PP2C family. In terms of assembly, interacts with SAUR19. Mg(2+) is required as a cofactor. It depends on Mn(2+) as a cofactor.

The enzyme catalyses O-phospho-L-seryl-[protein] + H2O = L-seryl-[protein] + phosphate. It carries out the reaction O-phospho-L-threonyl-[protein] + H2O = L-threonyl-[protein] + phosphate. In terms of biological role, dephosphorylates and represses plasma membrane H(+)-ATPases (PM H(+)-ATPases, e.g. AHA1 and AHA2), thus influencing negatively plant growth and fitness. The chain is Probable protein phosphatase 2C 64 from Arabidopsis thaliana (Mouse-ear cress).